The sequence spans 29 residues: Chassatide C10 (29 aa).

Residues 1–29 constitute a cross-link (cyclopeptide (Gly-Asn)); it reads GEYCGESCYLIPCFTPGCYCVSRQCVNKN. 3 disulfides stabilise this stretch: Cys-4-Cys-18, Cys-8-Cys-20, and Cys-13-Cys-25.

In terms of processing, this is a cyclic peptide.

Functionally, probably participates in a plant defense mechanism. Has no activity against bacteria up to a concentration of 80 uM. Has cytotoxic but no hemolytic activity. This Chassalia chartacea (Chassalia curviflora) protein is Chassatide C10.